A 202-amino-acid polypeptide reads, in one-letter code: Dephospho-CoA kinase (202 aa).

Residues 5 to 202 enclose the DPCK domain; sequence IVGLTGGIAS…DADYRARANP (198 aa). 13–18 provides a ligand contact to ATP; the sequence is ASGKSA.

This sequence belongs to the CoaE family.

Its subcellular location is the cytoplasm. The enzyme catalyses 3'-dephospho-CoA + ATP = ADP + CoA + H(+). The protein operates within cofactor biosynthesis; coenzyme A biosynthesis; CoA from (R)-pantothenate: step 5/5. In terms of biological role, catalyzes the phosphorylation of the 3'-hydroxyl group of dephosphocoenzyme A to form coenzyme A. The protein is Dephospho-CoA kinase of Xanthomonas axonopodis pv. citri (strain 306).